The primary structure comprises 741 residues: Transcription activator of gluconeogenesis BDBG_05438 (741 aa).

The interval 1–70 (MTASTRNGSP…NAKDPLRPRR (70 aa)) is disordered. Residues 25–61 (KSMTTTPANPPETKSQTNGKGSGTAQSSQKPASTSAN) are compositionally biased toward polar residues. Residues 77–105 (CFACQRAHLTCGDERPCQRCIKRGLQDAC) constitute a DNA-binding region (zn(2)-C6 fungal-type). Disordered regions lie at residues 135-163 (QANTTRNIPNQRGNASNSNSNKVSRQSVS), 202-239 (SVFHAQSPSSTQNFDLSSNPQTQNLSSAMSQTASSVSG), 285-321 (GAGDTPPSDSATQRGSIGRSSGTFTAQNFGDSANNQS), 401-421 (TNLMHPTNTPQQSRISTPGLK), 559-590 (GSSLSSASSVRGSSTFTPRNNNTHNSIDPHTG), and 655-741 (FHGK…AKRG). The span at 202-226 (SVFHAQSPSSTQNFDLSSNPQTQNL) shows a compositional bias: polar residues. The segment covering 227-238 (SSAMSQTASSVS) has biased composition (low complexity). 2 stretches are compositionally biased toward polar residues: residues 291–321 (PSDSATQRGSIGRSSGTFTAQNFGDSANNQS) and 401–416 (TNLMHPTNTPQQSRIS). Residues 560 to 572 (SSLSSASSVRGSS) are compositionally biased toward low complexity. Residues 573 to 586 (TFTPRNNNTHNSID) show a composition bias toward polar residues. The segment covering 672–718 (TGTTTSGDVATTTATGTSTSNGANANTNGNNTNPNDPSTAASSSASS) has biased composition (low complexity). The span at 723 to 732 (RSNHLGKRGG) shows a compositional bias: basic residues.

The protein belongs to the ERT1/acuK family.

The protein resides in the nucleus. Transcription factor which regulates nonfermentable carbon utilization. Activator of gluconeogenetic genes. The chain is Transcription activator of gluconeogenesis BDBG_05438 from Blastomyces gilchristii (strain SLH14081) (Blastomyces dermatitidis).